A 150-amino-acid polypeptide reads, in one-letter code: Cytochrome c oxidase subunit 5A, mitochondrial (150 aa).

Residues 1 to 41 (MLGAALRRCAVAATTRAGPRGLLHSARTPGPAAAIQSVRCX) constitute a mitochondrion transit peptide. Positions 2–17 (LGAALRRCAVAATTRA) match the SIFI-degron motif. An N6-acetyllysine mark is found at K87 and K113. The residue at position 141 (T141) is a Phosphothreonine.

This sequence belongs to the cytochrome c oxidase subunit 5A family. In terms of assembly, component of the cytochrome c oxidase (complex IV, CIV), a multisubunit enzyme composed of 14 subunits. The complex is composed of a catalytic core of 3 subunits MT-CO1, MT-CO2 and MT-CO3, encoded in the mitochondrial DNA, and 11 supernumerary subunits COX4I, COX5A, COX5B, COX6A, COX6B, COX6C, COX7A, COX7B, COX7C, COX8 and NDUFA4, which are encoded in the nuclear genome. The complex exists as a monomer or a dimer and forms supercomplexes (SCs) in the inner mitochondrial membrane with NADH-ubiquinone oxidoreductase (complex I, CI) and ubiquinol-cytochrome c oxidoreductase (cytochrome b-c1 complex, complex III, CIII), resulting in different assemblies (supercomplex SCI(1)III(2)IV(1) and megacomplex MCI(2)III(2)IV(2)). Interacts with AFG1L. Interacts with RAB5IF. In terms of processing, in response to mitochondrial stress, the precursor protein is ubiquitinated by the SIFI complex in the cytoplasm before mitochondrial import, leading to its degradation. Within the SIFI complex, UBR4 initiates ubiquitin chain that are further elongated or branched by KCMF1.

It is found in the mitochondrion inner membrane. Its pathway is energy metabolism; oxidative phosphorylation. Component of the cytochrome c oxidase, the last enzyme in the mitochondrial electron transport chain which drives oxidative phosphorylation. The respiratory chain contains 3 multisubunit complexes succinate dehydrogenase (complex II, CII), ubiquinol-cytochrome c oxidoreductase (cytochrome b-c1 complex, complex III, CIII) and cytochrome c oxidase (complex IV, CIV), that cooperate to transfer electrons derived from NADH and succinate to molecular oxygen, creating an electrochemical gradient over the inner membrane that drives transmembrane transport and the ATP synthase. Cytochrome c oxidase is the component of the respiratory chain that catalyzes the reduction of oxygen to water. Electrons originating from reduced cytochrome c in the intermembrane space (IMS) are transferred via the dinuclear copper A center (CU(A)) of subunit 2 and heme A of subunit 1 to the active site in subunit 1, a binuclear center (BNC) formed by heme A3 and copper B (CU(B)). The BNC reduces molecular oxygen to 2 water molecules using 4 electrons from cytochrome c in the IMS and 4 protons from the mitochondrial matrix. The chain is Cytochrome c oxidase subunit 5A, mitochondrial (COX5A) from Pan paniscus (Pygmy chimpanzee).